We begin with the raw amino-acid sequence, 430 residues long: PCI domain-containing protein 2 homolog (430 aa).

Residues 243-424 (ITYRFFNGRL…ALVVSPTNPF (182 aa)) form the PCI domain.

Belongs to the CSN12 family.

This is PCI domain-containing protein 2 homolog (pcid2) from Dictyostelium discoideum (Social amoeba).